Consider the following 159-residue polypeptide: Putative polyketide cyclase (159 aa).

To polyketide cyclases.

In terms of biological role, involved in developmentally regulated synthesis of a compound biosynthetically related to polyketide antibiotics which is essential for spore color in Streptomyces coelicolor. This is Putative polyketide cyclase from Streptomyces coelicolor (strain ATCC BAA-471 / A3(2) / M145).